Reading from the N-terminus, the 436-residue chain is Protein disulfide-isomerase (436 aa).

Positions 216 to 365 (FLAGKIDPSI…VEDATESAKA (150 aa)) constitute a Thioredoxin domain. Active-site nucleophile residues include Cys-266 and Cys-269. Cys-266 and Cys-269 are disulfide-bonded. Positions 328 to 436 (TLVPHCRGSR…ASASSVKDEL (109 aa)) are disordered. Residues 334–343 (RGSRPVHRRE) are compositionally biased toward basic residues. 2 stretches are compositionally biased toward low complexity: residues 362–377 (SAKASASSATDSAASA) and 385–436 (VKSG…KDEL). Positions 433 to 436 (KDEL) match the Prevents secretion from ER motif.

This sequence belongs to the protein disulfide isomerase family.

The protein resides in the endoplasmic reticulum lumen. It catalyses the reaction Catalyzes the rearrangement of -S-S- bonds in proteins.. Functionally, participates in the folding of proteins containing disulfide bonds, may be involved in glycosylation, prolyl hydroxylation and triglyceride transfer. The chain is Protein disulfide-isomerase from Alternaria alternata (Alternaria rot fungus).